We begin with the raw amino-acid sequence, 259 residues long: Snake venom serine proteinase 2 (259 aa).

The N-terminal stretch at 1 to 18 (MVLIRVLANLLILQLSYA) is a signal peptide. Positions 19 to 24 (QKSSEL) are excised as a propeptide. Residues 25–250 (IFGGRPCNRN…HLDWIQSIIA (226 aa)) form the Peptidase S1 domain. Intrachain disulfides connect Cys-31–Cys-162, Cys-49–Cys-65, Cys-97–Cys-257, Cys-141–Cys-211, Cys-173–Cys-190, and Cys-201–Cys-226. Active-site charge relay system residues include His-64 and Asp-109. Residue Ser-205 is the Charge relay system of the active site.

The protein belongs to the peptidase S1 family. Snake venom subfamily. Monomer. In terms of tissue distribution, expressed by the venom gland.

It localises to the secreted. Its function is as follows. Snake venom serine protease that may act in the hemostasis system of the prey. In Crotalus adamanteus (Eastern diamondback rattlesnake), this protein is Snake venom serine proteinase 2.